The sequence spans 436 residues: MNNIRTIKGGVNLKGKIKVPGDKSISHRALIIGSIAEGETTIEGFLYSEDPLSTADCLRKLGVNIPEIKKDKPFTISGLGINGLKEPKEILNCGNSGTTMRLLMGLLAGQEGKNFILTGDISLNERPMGRVGKPLSLMGGKIFGREKGNKAPISINGNKLKGCVMGTPVASAQVKSAILLAGLKASGTTSVIEPASSRDHTERMLKAFGADITIRGEFGRNVVIKSGGSLIGQKILIPGDISSASFWMIAASIVPNSEVLIQNVGLNPTRTGILNIMNSMGCNYEILDKSTIAGEPIGSIKVKTSNNLKSFIIEGDILPKLIDEIPILTVAACFCNGVSEIKDAQELRVKETDRLKVMARQLQKFGAEITEKEDGLIINGQSKFHSAEVDSETDHRVAMSLAIASLLAKGTSKIMRADAASVSYPTFWEELAKLTN.

Residues Lys-23, Ser-24, and Arg-28 each contribute to the 3-phosphoshikimate site. Position 23 (Lys-23) interacts with phosphoenolpyruvate. Phosphoenolpyruvate-binding residues include Gly-97 and Arg-126. 3-phosphoshikimate-binding residues include Ser-171, Gln-173, Asp-323, and Lys-350. Gln-173 serves as a coordination point for phosphoenolpyruvate. Asp-323 functions as the Proton acceptor in the catalytic mechanism. 2 residues coordinate phosphoenolpyruvate: Arg-354 and Arg-396.

It belongs to the EPSP synthase family. In terms of assembly, monomer.

The protein localises to the cytoplasm. The enzyme catalyses 3-phosphoshikimate + phosphoenolpyruvate = 5-O-(1-carboxyvinyl)-3-phosphoshikimate + phosphate. The protein operates within metabolic intermediate biosynthesis; chorismate biosynthesis; chorismate from D-erythrose 4-phosphate and phosphoenolpyruvate: step 6/7. Functionally, catalyzes the transfer of the enolpyruvyl moiety of phosphoenolpyruvate (PEP) to the 5-hydroxyl of shikimate-3-phosphate (S3P) to produce enolpyruvyl shikimate-3-phosphate and inorganic phosphate. This chain is 3-phosphoshikimate 1-carboxyvinyltransferase, found in Prochlorococcus marinus (strain MIT 9301).